A 232-amino-acid polypeptide reads, in one-letter code: Noggin (232 aa).

The signal sequence occupies residues 1 to 27 (MERCPSLGVTLYALVVVLGLRAAPAGG). A glycan (N-linked (GlcNAc...) asparagine) is linked at Asn-62. Positions 77–99 (GFMATSPPEDRPGGGGGPAGGAE) are disordered. Intrachain disulfides connect Cys-155–Cys-192, Cys-178–Cys-228, Cys-184–Cys-230, and Cys-207–Cys-215.

It belongs to the noggin family. Homodimer. Interacts with GDF5; inhibits chondrocyte differentiation. In terms of tissue distribution, expressed in condensing cartilage and immature chondrocytes.

It localises to the secreted. Its function is as follows. Essential for cartilage morphogenesis and joint formation. Inhibitor of bone morphogenetic proteins (BMP) signaling which is required for growth and patterning of the neural tube and somite. Inhibits chondrocyte differentiation through its interaction with GDF5 and, probably, GDF6. The sequence is that of Noggin (Nog) from Mus musculus (Mouse).